Here is a 308-residue protein sequence, read N- to C-terminus: Aspartate carbamoyltransferase catalytic subunit (308 aa).

Carbamoyl phosphate contacts are provided by Arg59 and Thr60. Lys87 is a binding site for L-aspartate. The carbamoyl phosphate site is built by Arg109, His139, and Gln142. 2 residues coordinate L-aspartate: Arg172 and Arg224. Ala265 and Pro266 together coordinate carbamoyl phosphate.

The protein belongs to the aspartate/ornithine carbamoyltransferase superfamily. ATCase family. As to quaternary structure, heterododecamer (2C3:3R2) of six catalytic PyrB chains organized as two trimers (C3), and six regulatory PyrI chains organized as three dimers (R2).

It carries out the reaction carbamoyl phosphate + L-aspartate = N-carbamoyl-L-aspartate + phosphate + H(+). It participates in pyrimidine metabolism; UMP biosynthesis via de novo pathway; (S)-dihydroorotate from bicarbonate: step 2/3. In terms of biological role, catalyzes the condensation of carbamoyl phosphate and aspartate to form carbamoyl aspartate and inorganic phosphate, the committed step in the de novo pyrimidine nucleotide biosynthesis pathway. This chain is Aspartate carbamoyltransferase catalytic subunit, found in Streptococcus mutans serotype c (strain ATCC 700610 / UA159).